The primary structure comprises 181 residues: Putative NAD(P)H-dependent FMN-containing oxidoreductase YwqN (181 aa).

The protein belongs to the SsuE family. Requires FMN as cofactor.

In terms of biological role, putative NADPH-dependent oxidoreductase. In Bacillus subtilis (strain 168), this protein is Putative NAD(P)H-dependent FMN-containing oxidoreductase YwqN (ywqN).